Reading from the N-terminus, the 1241-residue chain is Plasma membrane calcium-transporting ATPase 4 (1241 aa).

Residues 1-92 (MTNPSDRVLP…NVIPPKKPKT (92 aa)) are Cytoplasmic-facing. A Phosphoserine modification is found at S13. A helical transmembrane segment spans residues 93–113 (FLELVWEALQDVTLIILEIAA). Residues 114–150 (IISLVLSFYRPAGEENELCGQVATTPEDENEAQAGWI) are Extracellular-facing. A helical transmembrane segment spans residues 151 to 171 (EGAAILFSVIIVVLVTAFNDW). Residues 172 to 356 (SKEKQFRGLQ…KEKSVLQGKL (185 aa)) lie on the Cytoplasmic side of the membrane. Positions 294-318 (EGEKKKKGKKQGVPENRNKAKTQDG) are disordered. Residue S328 is modified to Phosphoserine. A helical membrane pass occupies residues 357 to 376 (TRLAVQIGKAGLLMSALTVF). Residues 377 to 409 (ILILYFVIDNFVINRRPWLPECTPIYIQYFVKF) lie on the Extracellular side of the membrane. A helical transmembrane segment spans residues 410–427 (FIIGITVLVVAVPEGLPL). Residues 428-840 (AVTISLAYSV…MWGRNVYDSI (413 aa)) are Cytoplasmic-facing. The active-site 4-aspartylphosphate intermediate is the D465. Positions 785 and 789 each coordinate Mg(2+). A helical transmembrane segment spans residues 841–860 (SKFLQFQLTVNVVAVIVAFT). Over 861-870 (GACITQDSPL) the chain is Extracellular. The chain crosses the membrane as a helical span at residues 871–891 (KAVQMLWVNLIMDTFASLALA). Residues 892–911 (TEPPTESLLKRRPYGRNKPL) are Cytoplasmic-facing. Residues 912 to 934 (ISRTMMKNILGHAFYQLIVIFIL) traverse the membrane as a helical segment. The Extracellular portion of the chain corresponds to 935–952 (VFAGEKFFDIDSGRKAPL). The chain crosses the membrane as a helical span at residues 953-974 (HSPPSQHYTIVFNTFVLMQLFN). The Cytoplasmic portion of the chain corresponds to 975–993 (EINSRKIHGEKNVFSGIYR). The chain crosses the membrane as a helical span at residues 994 to 1015 (NIIFCSVVLGTFICQIFIVEFG). The Extracellular portion of the chain corresponds to 1016–1025 (GKPFSCTSLS). A helical transmembrane segment spans residues 1026–1047 (LSQWLWCLFIGIGELLWGQFIS). Topologically, residues 1048 to 1241 (AIPTRSLKFL…SSLQSLETSV (194 aa)) are cytoplasmic. The segment at 1086–1103 (LRRGQILWFRGLNRIQTQ) is calmodulin-binding subdomain A. At T1102 the chain carries Phosphothreonine; by PKC. Positions 1104–1113 (IDVINTFQTG) are calmodulin-binding subdomain B.

Belongs to the cation transport ATPase (P-type) (TC 3.A.3) family. Type IIB subfamily. As to quaternary structure, interacts with PDZD11. Interacts with SLC35G1 and STIM1. Interacts with calmodulin. In terms of tissue distribution, isoform XB is the most abundant isoform and is expressed ubiquitously. Isoforms containing segment Z have only been detected in heart, while isoforms containing segment a have been found in heart, stomach and brain cortex.

It localises to the cell membrane. The protein localises to the cell projection. It is found in the cilium. Its subcellular location is the flagellum membrane. It carries out the reaction Ca(2+)(in) + ATP + H2O = Ca(2+)(out) + ADP + phosphate + H(+). With respect to regulation, activated by calcium/calmodulin. Calcium/calmodulin-regulated and magnesium-dependent enzyme that catalyzes the hydrolysis of ATP coupled with the transport of calcium out of the cell. By regulating sperm cell calcium homeostasis, may play a role in sperm motility. This chain is Plasma membrane calcium-transporting ATPase 4, found in Homo sapiens (Human).